Here is a 541-residue protein sequence, read N- to C-terminus: MNQSLGPSEPEKPQDNTAEDSTEPTPDNHRADLSELRGIPKKQTGIEGFEDISHGGLPLGRTTLVSGTSGTGKTLFAMQFLYNGIVKYQEPGIFVTFEETPADIIRNASSFGWDLQALIDRGQLFILDASPDPEGYEVSGNFDLSALIERIQYAIRKYKAKRVSIDSVTAIFQQYDPAGVVRRELFRLTARLKQANVTTVMTTERTDEYGPIARYGVEEFVSDNVVILRNILEGEKRRRTIEILKLRGTTHMKGEYPFTITNDGINIFPLGAMQLTQRSSNVRVSSGIEKLDEMCGGGFFKDSIILATGATGTGKTSLVSKFLERGCLDGERCILFAYEESRAQLSRNASSWGIDLEEFERQGLLKIICAYPESAGLEDHLQKIKTEMMAFKPSRMAIDSLSALARGVSQNAFRQFVIGVTGLAKQEEITGFFTNTTDQFMGSHSITESHISTITDTIILLQYVEIRGEMARALNVFKMRGSWHDKGIREYLISNAGIQIRDSFRGYERIISGSPTRINVDEKNELSRIVQNVQALEEEGL.

Residues 1–40 form a disordered region; it reads MNQSLGPSEPEKPQDNTAEDSTEPTPDNHRADLSELRGIP. 2 KaiC domains span residues 21 to 268 and 282 to 541; these read STEP…INIF and VRVS…EEGL. Residues 26 to 35 show a composition bias toward basic and acidic residues; sequence PDNHRADLSE. Residues Gly70, Thr71, Gly72, Lys73, Thr74, Leu75, Ser110, Lys245, Leu246, Arg247, Thr249, His251, Thr261, Thr311, Gly312, Thr313, Gly314, Lys315, and Thr316 each coordinate ATP. Thr74 lines the Mg(2+) pocket. Mg(2+) is bound by residues Thr316 and Glu339. Residue Trp352 coordinates ATP. A Phosphoserine; by autocatalysis modification is found at Ser452. The residue at position 453 (Thr453) is a Phosphothreonine; by autocatalysis. 7 residues coordinate ATP: Arg472, Lys478, Met479, Arg480, Ser482, His484, and Lys486.

It belongs to the KaiC family. Homohexamer; hexamerization is dependent on ATP-binding. The KaiABC complex composition changes during the circadian cycle to control KaiC phosphorylation. Complexes KaiC(6), KaiA(2-4):KaiC(6), KaiB(6):KaiC(6) and KaiC(6):KaiB(6):KaiA(12) are among the most important forms, many form cooperatively. KaiC interacts with SasA, activating its autokinase function and leading to RpaA activation. Mg(2+) serves as cofactor. In terms of processing, phosphorylated on serine and threonine residues by autocatalysis. Has a 4 step phosphorylation cycle; the autokinase acts first on Thr-453, then Ser-452. When Ser-452 is modified KaiC switches to an autophosphatase mode, acting first on phospho-Thr-453 then phospho-Ser-452.

It carries out the reaction L-seryl-[protein] + ATP = O-phospho-L-seryl-[protein] + ADP + H(+). The catalysed reaction is L-threonyl-[protein] + ATP = O-phospho-L-threonyl-[protein] + ADP + H(+). The enzyme catalyses ATP + H2O = ADP + phosphate + H(+). Its activity is regulated as follows. The interaction with KaiA enhances its phosphorylation status, while the interaction with KaiB decreases it. Functionally, central component of the KaiABC oscillator complex, which constitutes the main circadian regulator in cyanobacteria. Complex composition changes during the circadian cycle to control KaiC phosphorylation. KaiA stimulates KaiC autophosphorylation, while KaiB sequesters KaiA, leading to KaiC autodephosphorylation. Clock output pathways impact the RpaA transcriptional regulator. KaiC enhances the autophosphorylation activity of SasA, which then transfers its phosphate group to RpaA to activate it. KaiB and KaiC together enhance the phospho-RpaA dephosphatase activity of CikA. In terms of biological role, has a weak, temperature-independent ATPase activity; ATPase activity defines the circadian period. The phosphorylation state of KaiC modulates its ATPase activity and effects KaiB binding. The sequence is that of Circadian clock oscillator protein KaiC from Parathermosynechococcus lividus (Thermostichus lividus).